The chain runs to 550 residues: Methyl-coenzyme M reductase subunit alpha (550 aa).

Gln-147 lines the coenzyme F430 pocket. Coenzyme B-binding positions include Arg-225, 256–257 (KH), and Arg-270. A Pros-methylhistidine modification is found at His-257. Arg-271 is modified (5-methylarginine). Tyr-333 contributes to the coenzyme M binding site. The residue at position 400 (Gln-400) is a 2-methylglutamine. Tyr-444 contacts coenzyme M. The residue at position 445 (Gly-445) is a 1-thioglycine. A (Z)-2,3-didehydroaspartate modification is found at Asp-450. S-methylcysteine is present on Cys-452.

This sequence belongs to the methyl-coenzyme M reductase alpha subunit family. As to quaternary structure, MCR is a hexamer of two alpha, two beta, and two gamma chains, forming a dimer of heterotrimers. Coenzyme F430 is required as a cofactor. The alpha subunit contains six modified amino acids near the active site region. Is methylated on His-257, Arg-271, Gln-400 and Cys-452, probably by the action of specific S-adenosylmethionine-dependent methyltransferases. Also contains a thioglycine at position 445, forming a thiopeptide bond. Contains a didehydroaspartate residue at position 450. The methylation on C5 of Arg-271 is a post-translational methylation not essential in vivo, but which plays a role for the stability and structural integrity of MCR.

Its subcellular location is the cytoplasm. The enzyme catalyses coenzyme B + methyl-coenzyme M = methane + coenzyme M-coenzyme B heterodisulfide. Its pathway is one-carbon metabolism; methyl-coenzyme M reduction; methane from methyl-coenzyme M: step 1/1. Functionally, component of the methyl-coenzyme M reductase (MCR) I that catalyzes the reductive cleavage of methyl-coenzyme M (CoM-S-CH3 or 2-(methylthio)ethanesulfonate) using coenzyme B (CoB or 7-mercaptoheptanoylthreonine phosphate) as reductant which results in the production of methane and the mixed heterodisulfide of CoB and CoM (CoM-S-S-CoB). This is the final step in methanogenesis. The polypeptide is Methyl-coenzyme M reductase subunit alpha (mcrA) (Methanothermobacter thermautotrophicus (strain ATCC 29096 / DSM 1053 / JCM 10044 / NBRC 100330 / Delta H) (Methanobacterium thermoautotrophicum)).